Here is a 438-residue protein sequence, read N- to C-terminus: Serine carboxypeptidase-like 5 (438 aa).

The N-terminal stretch at 1-28 (MANYISSVLKSLLLLLHLVFLIQQHVDS) is a signal peptide. 3 disulfide bridges follow: cysteine 87–cysteine 328, cysteine 251–cysteine 263, and cysteine 287–cysteine 294. N-linked (GlcNAc...) asparagine glycosylation occurs at asparagine 108. Serine 183 is a catalytic residue. A glycan (N-linked (GlcNAc...) asparagine) is linked at asparagine 347. Residue aspartate 363 is part of the active site. Asparagine 379 is a glycosylation site (N-linked (GlcNAc...) asparagine). Residue histidine 416 is part of the active site.

Belongs to the peptidase S10 family. As to expression, expressed in seedlings, roots, and siliques.

The protein localises to the secreted. In terms of biological role, probable carboxypeptidase. This is Serine carboxypeptidase-like 5 (SCPL5) from Arabidopsis thaliana (Mouse-ear cress).